We begin with the raw amino-acid sequence, 524 residues long: M-phase inducer phosphatase 1 (524 aa).

A Phosphodegron motif is present at residues 74 to 84 (MGSSESTDSGF). Ser76 carries the phosphoserine; by CHEK1 modification. Phosphoserine; by NEK11 is present on residues Ser79, Ser82, and Ser88. At Ser107 the chain carries Phosphoserine. The residue at position 124 (Ser124) is a Phosphoserine; by CHEK1 and CHEK2. A KEN box motif is present at residues 141–143 (KEN). Ser178 is modified (phosphoserine; by CHEK1). Residues 264–317 (LCSSSTRSVLKRPERSQEESPPGSTKRRKSMSGASPKESTNPEKAHETLHQSLS) are disordered. Ser279 and Ser293 each carry phosphoserine; by CHEK1 and CHEK2. A compositionally biased stretch (basic and acidic residues) spans 303–312 (TNPEKAHETL). At Ser321 the chain carries Phosphoserine. Residues 376–482 (LIKEFVIIDC…FFMKCQSYCE (107 aa)) enclose the Rhodanese domain. Cys431 is an active-site residue. At Thr507 the chain carries Phosphothreonine; by CHEK1. Ser513 and Ser519 each carry phosphoserine; by PLK3.

Belongs to the MPI phosphatase family. Interacts with CCNB1/cyclin B1. Interacts with YWHAE/14-3-3 epsilon when phosphorylated. Interacts with CUL1 specifically when CUL1 is neddylated and active. Interacts with BTRC/BTRCP1 and FBXW11/BTRCP2. Interactions with CUL1, BTRC and FBXW11 are enhanced upon DNA damage. Interacts with CHEK2; mediates CDC25A phosphorylation and degradation in response to infrared-induced DNA damages. Interacts with HSP90AB1; prevents heat shock-mediated CDC25A degradation and contributes to cell cycle progression. In terms of processing, phosphorylated by CHEK1 on Ser-76, Ser-124, Ser-178, Ser-279, Ser-293 and Thr-507 during checkpoint mediated cell cycle arrest. Also phosphorylated by CHEK2 on Ser-124, Ser-279, and Ser-293 during checkpoint mediated cell cycle arrest. Phosphorylation on Ser-178 and Thr-507 creates binding sites for YWHAE/14-3-3 epsilon which inhibits CDC25A. Phosphorylation on Ser-76, Ser-124, Ser-178, Ser-279 and Ser-293 may also promote ubiquitin-dependent proteolysis of CDC25A by the SCF complex. Phosphorylation of CDC25A at Ser-76 by CHEK1 primes it for subsequent phosphorylation at Ser-79, Ser-82 and Ser-88 by NEK11. Phosphorylation by NEK11 is required for BTRC-mediated polyubiquitination and degradation. Phosphorylation by PIM1 leads to an increase in phosphatase activity. Phosphorylated by PLK3 following DNA damage, leading to promote its ubiquitination and degradation. Ubiquitinated by the anaphase promoting complex/cyclosome (APC/C) ubiquitin ligase complex that contains FZR1/CDH1 during G1 phase leading to its degradation by the proteasome. Ubiquitinated by a SCF complex containing BTRC and FBXW11 during S phase leading to its degradation by the proteasome. Deubiquitination by USP17L2/DUB3 leads to its stabilization.

The catalysed reaction is O-phospho-L-tyrosyl-[protein] + H2O = L-tyrosyl-[protein] + phosphate. With respect to regulation, stimulated by B-type cyclins. Stimulated by PIM1-mediated phosphorylation. In terms of biological role, tyrosine protein phosphatase which functions as a dosage-dependent inducer of mitotic progression. Directly dephosphorylates CDK1 and stimulates its kinase activity. Also dephosphorylates CDK2 in complex with cyclin-E, in vitro. This chain is M-phase inducer phosphatase 1 (CDC25A), found in Homo sapiens (Human).